The sequence spans 407 residues: GTPase Obg (407 aa).

In terms of domain architecture, Obg spans Met1 to Leu159. Positions Asn127–Arg150 are disordered. Positions Arg129 to Pro143 are enriched in polar residues. The region spanning Ala160–Glu333 is the OBG-type G domain. Residues Gly166–Ser173, Phe191–Val195, Asp213–Gly216, Asn283–Asp286, and Ser314–Ile316 each bind GTP. The Mg(2+) site is built by Ser173 and Thr193. The interval Val378–Asp407 is disordered. The span at Gly385–Pro400 shows a compositional bias: acidic residues.

This sequence belongs to the TRAFAC class OBG-HflX-like GTPase superfamily. OBG GTPase family. In terms of assembly, monomer. Mg(2+) is required as a cofactor.

The protein resides in the cytoplasm. Its function is as follows. An essential GTPase which binds GTP, GDP and possibly (p)ppGpp with moderate affinity, with high nucleotide exchange rates and a fairly low GTP hydrolysis rate. Plays a role in control of the cell cycle, stress response, ribosome biogenesis and in those bacteria that undergo differentiation, in morphogenesis control. This Pseudomonas entomophila (strain L48) protein is GTPase Obg.